Here is a 162-residue protein sequence, read N- to C-terminus: Peroxiredoxin-2D (162 aa).

Positions 4-162 constitute a Thioredoxin domain; the sequence is ITVGDVVPDG…SSAEDILKAL (159 aa). The Cysteine sulfenic acid (-SOH) intermediate role is filled by Cys-51.

Belongs to the peroxiredoxin family. Prx5 subfamily. In terms of assembly, monomer. As to expression, exclusively expressed in buds and flowers. Also detected in pollen.

The protein localises to the cytoplasm. The catalysed reaction is [glutaredoxin]-dithiol + a hydroperoxide = [glutaredoxin]-disulfide + an alcohol + H2O. Its function is as follows. Thiol-specific peroxidase that catalyzes the reduction of hydrogen peroxide and organic hydroperoxides to water and alcohols, respectively. Plays a role in cell protection against oxidative stress by detoxifying peroxides. May be involved in intracellular redox signaling. This is Peroxiredoxin-2D (PRXIID) from Arabidopsis thaliana (Mouse-ear cress).